The following is a 317-amino-acid chain: Carbonic anhydrase 5B, mitochondrial (317 aa).

Residues 1–33 (MVVMNSLRVILQASPGKLLWRKFQIPRFMPARP) constitute a mitochondrion transit peptide. Residues 37-296 (YTCTYKTRNR…LMNRTVRSSF (260 aa)) enclose the Alpha-carbonic anhydrase domain. The Zn(2+) site is built by H130, H132, and H155. 235 to 236 (TT) lines the substrate pocket.

This sequence belongs to the alpha-carbonic anhydrase family. Zn(2+) serves as cofactor. Strongest expression in heart, pancreas, kidney, placenta, lung, and skeletal muscle. Not expressed in liver.

The protein resides in the mitochondrion. The enzyme catalyses hydrogencarbonate + H(+) = CO2 + H2O. With respect to regulation, inhibited by coumarins, sulfonamide derivatives such as acetazolamide (AZA), saccharin and Foscarnet (phosphonoformate trisodium salt). Functionally, mitochondrial carbonic anhydrase that catalyzes the reversible conversion of carbon dioxide to bicarbonate/HCO3. The polypeptide is Carbonic anhydrase 5B, mitochondrial (CA5B) (Homo sapiens (Human)).